The sequence spans 318 residues: 2-oxoacid:ferredoxin oxidoreductase 1, subunit beta (318 aa).

[4Fe-4S] cluster-binding residues include cysteine 18, cysteine 21, and cysteine 52. Thiamine diphosphate is bound by residues 50–53 and histidine 69; that span reads IGCS. Aspartate 94 contacts Mg(2+). 95-96 provides a ligand contact to thiamine diphosphate; the sequence is GD. 2 residues coordinate Mg(2+): asparagine 122 and valine 124. 126–127 is a binding site for thiamine diphosphate; the sequence is GL. Cysteine 201 lines the [4Fe-4S] cluster pocket.

In terms of assembly, heterodimer composed of an alpha and a beta subunit. It depends on [4Fe-4S] cluster as a cofactor. The cofactor is thiamine diphosphate. Requires Mg(2+) as cofactor.

It carries out the reaction a 2-oxocarboxylate + 2 oxidized [2Fe-2S]-[ferredoxin] + CoA = an acyl-CoA + 2 reduced [2Fe-2S]-[ferredoxin] + CO2 + H(+). In terms of biological role, catalyzes the coenzyme A-dependent oxidative decarboxylation of different 2-oxoacids such as pyruvate, 2-oxobutyrate and glyoxylate to form their CoA derivatives. The polypeptide is 2-oxoacid:ferredoxin oxidoreductase 1, subunit beta (Aeropyrum pernix (strain ATCC 700893 / DSM 11879 / JCM 9820 / NBRC 100138 / K1)).